A 101-amino-acid polypeptide reads, in one-letter code: Small ribosomal subunit protein uS14 (101 aa).

It belongs to the universal ribosomal protein uS14 family. In terms of assembly, part of the 30S ribosomal subunit. Contacts proteins S3 and S10.

Binds 16S rRNA, required for the assembly of 30S particles and may also be responsible for determining the conformation of the 16S rRNA at the A site. The chain is Small ribosomal subunit protein uS14 from Escherichia coli O139:H28 (strain E24377A / ETEC).